A 507-amino-acid polypeptide reads, in one-letter code: ATP synthase subunit alpha, chloroplastic (507 aa).

Residue 170 to 177 (GDRQTGKT) participates in ATP binding.

It belongs to the ATPase alpha/beta chains family. As to quaternary structure, F-type ATPases have 2 components, CF(1) - the catalytic core - and CF(0) - the membrane proton channel. CF(1) has five subunits: alpha(3), beta(3), gamma(1), delta(1), epsilon(1). CF(0) has four main subunits: a, b, b' and c.

The protein localises to the plastid. It is found in the chloroplast thylakoid membrane. The catalysed reaction is ATP + H2O + 4 H(+)(in) = ADP + phosphate + 5 H(+)(out). Its function is as follows. Produces ATP from ADP in the presence of a proton gradient across the membrane. The alpha chain is a regulatory subunit. This Amborella trichopoda protein is ATP synthase subunit alpha, chloroplastic.